The primary structure comprises 122 residues: Modulator protein MzrA (122 aa).

At 1-10 the chain is on the cytoplasmic side; sequence MKILTRIPRR. The chain crosses the membrane as a helical span at residues 11–31; it reads LLPWLLGGALALVAVSFAPAL. At 32–122 the chain is on the periplasmic side; that stretch reads LSHETVVQIR…NQDANRSIYS (91 aa).

It belongs to the MzrA family. In terms of assembly, interacts with EnvZ.

It localises to the cell inner membrane. Modulates the activity of the EnvZ/OmpR two-component regulatory system, probably by directly modulating EnvZ enzymatic activity and increasing stability of phosphorylated OmpR. The sequence is that of Modulator protein MzrA from Pantoea sp. (strain At-9b).